The chain runs to 1430 residues: Nephrocystin-4 (1430 aa).

The sufficient for basal bodies localization stretch occupies residues 824–1430 (MRMGNVGRPP…ETFCVKVRYE (607 aa)). The segment at 828–857 (NVGRPPEKKLKRRETLPPSNSRIITMHDGR) is disordered.

This sequence belongs to the NPHP4 family.

It is found in the cytoplasm. It localises to the cytoskeleton. The protein localises to the cilium basal body. Functionally, involved in the organization of apical junctions. Required for building functional cilia. Involved in the organization of the subapical actin network in multiciliated epithelial cells. Seems to recruit int to basal bodies of motile cilia which subsequently interacts with actin-modifying proteins such as daam1. May down-regulate the canonical Wnt pathway and promote the Wnt-PCP pathway. Acts as a negative regulator of the hippo pathway. This Xenopus laevis (African clawed frog) protein is Nephrocystin-4 (nphp4).